The chain runs to 107 residues: MNQYSEFHQLADQLMLYIEETLDGFSGDSDIDYETNGGVMTLTFENGSKIVINRQEPLHQVWPATKAGGYHFNYREGKWFCSRSGEEFFAKLSQAATTQAGEEVSFG.

It belongs to the frataxin family.

Involved in iron-sulfur (Fe-S) cluster assembly. May act as a regulator of Fe-S biogenesis. The sequence is that of Iron-sulfur cluster assembly protein CyaY from Yersinia intermedia.